Reading from the N-terminus, the 138-residue chain is Putative pre-16S rRNA nuclease (138 aa).

This sequence belongs to the YqgF nuclease family.

The protein resides in the cytoplasm. In terms of biological role, could be a nuclease involved in processing of the 5'-end of pre-16S rRNA. The sequence is that of Putative pre-16S rRNA nuclease from Citrobacter koseri (strain ATCC BAA-895 / CDC 4225-83 / SGSC4696).